The sequence spans 556 residues: Formate--tetrahydrofolate ligase (556 aa).

Residue 65–72 coordinates ATP; it reads TPAGEGKS.

The protein belongs to the formate--tetrahydrofolate ligase family.

It catalyses the reaction (6S)-5,6,7,8-tetrahydrofolate + formate + ATP = (6R)-10-formyltetrahydrofolate + ADP + phosphate. It functions in the pathway one-carbon metabolism; tetrahydrofolate interconversion. The protein is Formate--tetrahydrofolate ligase of Streptococcus pneumoniae (strain Hungary19A-6).